The sequence spans 674 residues: DNA ligase (674 aa).

Residues 42 to 46, 91 to 92, and Glu121 contribute to the NAD(+) site; these read DNVYD and SM. Residue Lys123 is the N6-AMP-lysine intermediate of the active site. The NAD(+) site is built by Arg144, Glu178, Lys294, and Lys318. Residues Cys412, Cys415, Cys430, and Cys435 each contribute to the Zn(2+) site. The BRCT domain occupies 596–674; that stretch reads VKDSFVAGKT…ETELLANLKD (79 aa).

It belongs to the NAD-dependent DNA ligase family. LigA subfamily. Mg(2+) serves as cofactor. Requires Mn(2+) as cofactor.

It catalyses the reaction NAD(+) + (deoxyribonucleotide)n-3'-hydroxyl + 5'-phospho-(deoxyribonucleotide)m = (deoxyribonucleotide)n+m + AMP + beta-nicotinamide D-nucleotide.. Functionally, DNA ligase that catalyzes the formation of phosphodiester linkages between 5'-phosphoryl and 3'-hydroxyl groups in double-stranded DNA using NAD as a coenzyme and as the energy source for the reaction. It is essential for DNA replication and repair of damaged DNA. This chain is DNA ligase, found in Lacticaseibacillus paracasei (strain ATCC 334 / BCRC 17002 / CCUG 31169 / CIP 107868 / KCTC 3260 / NRRL B-441) (Lactobacillus paracasei).